The chain runs to 198 residues: Beta-crystallin A1 (198 aa).

The tract at residues 1-13 (MAQINPLPVPLGP) is N-terminal arm. 2 Beta/gamma crystallin 'Greek key' domains span residues 14 to 53 (WKIT…KVEC) and 54 to 100 (GGWI…RPIC). Residues 101-106 (SANHKE) are connecting peptide. 2 Beta/gamma crystallin 'Greek key' domains span residues 107 to 148 (SKLV…KVQC) and 149 to 197 (GSWV…RRIQ).

It belongs to the beta/gamma-crystallin family. As to quaternary structure, homo/heterodimer, or complexes of higher-order. The structure of beta-crystallin oligomers seems to be stabilized through interactions between the N-terminal arms.

In terms of biological role, crystallins are the dominant structural components of the vertebrate eye lens. In Rana temporaria (European common frog), this protein is Beta-crystallin A1.